The sequence spans 528 residues: (R)-citramalate synthase (528 aa).

In terms of domain architecture, Pyruvate carboxyltransferase spans 5–271 (VYIYDTTLRD…IPQENLKKLT (267 aa)).

The protein belongs to the alpha-IPM synthase/homocitrate synthase family.

It carries out the reaction pyruvate + acetyl-CoA + H2O = (3R)-citramalate + CoA + H(+). It participates in amino-acid biosynthesis; L-isoleucine biosynthesis; 2-oxobutanoate from pyruvate: step 1/3. Catalyzes the condensation of pyruvate and acetyl-coenzyme A to form (R)-citramalate. The protein is (R)-citramalate synthase of Aquifex aeolicus (strain VF5).